The following is a 132-amino-acid chain: Small ribosomal subunit protein uS8 (132 aa).

The protein belongs to the universal ribosomal protein uS8 family. Part of the 30S ribosomal subunit. Contacts proteins S5 and S12.

In terms of biological role, one of the primary rRNA binding proteins, it binds directly to 16S rRNA central domain where it helps coordinate assembly of the platform of the 30S subunit. The sequence is that of Small ribosomal subunit protein uS8 from Francisella tularensis subsp. holarctica (strain FTNF002-00 / FTA).